Here is a 200-residue protein sequence, read N- to C-terminus: GMP synthase [glutamine-hydrolyzing] subunit A (200 aa).

The Glutamine amidotransferase type-1 domain occupies 3-193; sequence KIYVVDNGGQ…IGICASYREI (191 aa). Cys-80 serves as the catalytic Nucleophile. Residues His-167 and Glu-169 contribute to the active site.

As to quaternary structure, heterodimer composed of a glutamine amidotransferase subunit (A) and a GMP-binding subunit (B).

The catalysed reaction is XMP + L-glutamine + ATP + H2O = GMP + L-glutamate + AMP + diphosphate + 2 H(+). It participates in purine metabolism; GMP biosynthesis; GMP from XMP (L-Gln route): step 1/1. Functionally, catalyzes the synthesis of GMP from XMP. This chain is GMP synthase [glutamine-hydrolyzing] subunit A, found in Thermoplasma acidophilum (strain ATCC 25905 / DSM 1728 / JCM 9062 / NBRC 15155 / AMRC-C165).